A 471-amino-acid chain; its full sequence is tRNA modification GTPase MnmE (471 aa).

3 residues coordinate (6S)-5-formyl-5,6,7,8-tetrahydrofolate: Arg26, Glu83, and Lys136. A TrmE-type G domain is found at 232–393 (GLRVVLAGQP…LRRRLLQLAG (162 aa)). Position 242 (Asn242) interacts with K(+). Residues 242-247 (NVGKSS), 261-267 (TPIAGTT), 286-289 (DTAG), 354-357 (NKAD), and 374-376 (SAR) each bind GTP. Ser246 is a Mg(2+) binding site. Residues Thr261, Ile263, and Thr266 each coordinate K(+). Thr267 lines the Mg(2+) pocket. A (6S)-5-formyl-5,6,7,8-tetrahydrofolate-binding site is contributed by Lys471.

Belongs to the TRAFAC class TrmE-Era-EngA-EngB-Septin-like GTPase superfamily. TrmE GTPase family. In terms of assembly, homodimer. Heterotetramer of two MnmE and two MnmG subunits. The cofactor is K(+).

It is found in the cytoplasm. In terms of biological role, exhibits a very high intrinsic GTPase hydrolysis rate. Involved in the addition of a carboxymethylaminomethyl (cmnm) group at the wobble position (U34) of certain tRNAs, forming tRNA-cmnm(5)s(2)U34. This Methylibium petroleiphilum (strain ATCC BAA-1232 / LMG 22953 / PM1) protein is tRNA modification GTPase MnmE.